The sequence spans 223 residues: Imidazoleglycerol-phosphate dehydratase (223 aa).

Belongs to the imidazoleglycerol-phosphate dehydratase family.

It carries out the reaction D-erythro-1-(imidazol-4-yl)glycerol 3-phosphate = 3-(imidazol-4-yl)-2-oxopropyl phosphate + H2O. The protein operates within amino-acid biosynthesis; L-histidine biosynthesis; L-histidine from 5-phospho-alpha-D-ribose 1-diphosphate: step 6/9. The protein is Imidazoleglycerol-phosphate dehydratase (HIS3) of Candida albicans (Yeast).